The chain runs to 309 residues: Small ribosomal subunit biogenesis GTPase RsgA (309 aa).

In terms of domain architecture, CP-type G spans 64–225 (ENELVRPPLA…VADTPGFSTY (162 aa)). GTP-binding positions include 113–116 (SKTD) and 168–176 (GQTGAGKST). The Zn(2+) site is built by Cys249, Cys254, His256, and Cys262.

Belongs to the TRAFAC class YlqF/YawG GTPase family. RsgA subfamily. As to quaternary structure, monomer. Associates with 30S ribosomal subunit, binds 16S rRNA. Zn(2+) serves as cofactor.

The protein localises to the cytoplasm. One of several proteins that assist in the late maturation steps of the functional core of the 30S ribosomal subunit. Helps release RbfA from mature subunits. May play a role in the assembly of ribosomal proteins into the subunit. Circularly permuted GTPase that catalyzes slow GTP hydrolysis, GTPase activity is stimulated by the 30S ribosomal subunit. The protein is Small ribosomal subunit biogenesis GTPase RsgA of Pediococcus pentosaceus (strain ATCC 25745 / CCUG 21536 / LMG 10740 / 183-1w).